A 444-amino-acid polypeptide reads, in one-letter code: Cysteine proteinase 2 (444 aa).

Residues 1-19 (MATSRAALCAVAVVCVVLA) constitute a signal peptide (or 27). The propeptide at 20-124 (AACAPARAIH…HYRKARADLS (105 aa)) is activation peptide. Residues Cys147 and Cys188 are joined by a disulfide bond. Cys150 is a catalytic residue. An N-linked (GlcNAc...) asparagine glycan is attached at Asn228. Residues His289 and Asn309 contribute to the active site. Asn372 carries an N-linked (GlcNAc...) asparagine glycan.

The protein belongs to the peptidase C1 family.

The protein localises to the lysosome. Functionally, the cysteine proteinases have a potential role in host-parasite interaction and virulence. The protein is Cysteine proteinase 2 (CYS2) of Leishmania pifanoi.